The primary structure comprises 787 residues: Disease resistance protein ADR1 (787 aa).

An RPW8 domain is found at 1–149; that stretch reads MASFIDLFAG…LLTERNDSLS (149 aa). A coiled-coil region spans residues 96–112; it reads HANKMKDLEKQISRFLN. 193–200 is an ATP binding site; sequence GMSGSGKT. The NB-ARC domain maps to 247 to 414; the sequence is HQRKLVILDD…PLDLLTSVWV (168 aa). LRR repeat units lie at residues 549 to 575, 576 to 599, 650 to 674, and 722 to 745; these read MSRLRVLVIINNGMSPARLHGFSIFAN, LAKLRSLWLKRVHVPELTSCTIPL, ITSLNSLSITNCPRILELPKNLSNV, and LGSLEKIDMRECSLLGLPSSVAAL.

Belongs to the disease resistance NB-LRR family.

In terms of biological role, disease resistance (R) protein that mediates resistance against Hyaloperonospora parasitica in a salicylic acid-dependent manner. Also mediates resistance against Erysiphe cichoracearum is both salicylic acid-dependent and partially NPR1-dependent. Resistance proteins guard the plant against pathogens that contain an appropriate avirulence protein via an indirect interaction with this avirulence protein. That triggers a defense system including the hypersensitive response, which restricts the pathogen growth. The chain is Disease resistance protein ADR1 (ADR1) from Arabidopsis thaliana (Mouse-ear cress).